A 396-amino-acid polypeptide reads, in one-letter code: Purine ribonucleoside efflux pump NepI (396 aa).

Over 1-21 (MSEFIAENRGADAITRPNWSA) the chain is Cytoplasmic. A helical membrane pass occupies residues 22–42 (VFSVAFCVACLIIVEFLPVSL). Residues 43–54 (LTPMAQDLGISE) lie on the Periplasmic side of the membrane. The chain crosses the membrane as a helical span at residues 55–75 (GVAGQSVTVTAFVAMFASLFI). At 76 to 85 (TQTIQATDRR) the chain is on the cytoplasmic side. A helical transmembrane segment spans residues 86–106 (YVVILFAVLLTLSCLLVSFAN). Residue Ser-107 is a topological domain, periplasmic. The chain crosses the membrane as a helical span at residues 108 to 128 (FSLLLIGRACLGLALGGFWAM). The Cytoplasmic segment spans residues 129–147 (SASLTMRLVPPRTVPKALS). A helical transmembrane segment spans residues 148–168 (VIFGAVSIALVIAAPLGCFLG). Residues 169–175 (ELIGWRN) are Periplasmic-facing. A helical transmembrane segment spans residues 176–196 (VFNAAAAMGVLCIFWIIKSLP). At 197 to 215 (SLPGEPSHQKQNTFRLLQR) the chain is on the cytoplasmic side. A helical transmembrane segment spans residues 216 to 236 (PGVMAGMIAIFMSFAGQFAFF). Over 237–255 (TYIRPVYMTLAGFGVDGLT) the chain is Periplasmic. The chain crosses the membrane as a helical span at residues 256 to 276 (LVLLSFGIASFVGTSLSSFIL). The Cytoplasmic segment spans residues 277–281 (KRSVK). A helical transmembrane segment spans residues 282 to 302 (LALAGAPFVLALSALVLTLWG). At 303-305 (SDK) the chain is on the periplasmic side. Residues 306-326 (IVATGVAIIWGLTFALIPVGW) form a helical membrane-spanning segment. Residues 327–343 (STWITRSLADQAEKAGS) lie on the Cytoplasmic side of the membrane. Residues 344 to 364 (IQVAVIQLANTCGAAIGGYAL) form a helical membrane-spanning segment. Residues 365–366 (DN) are Periplasmic-facing. The chain crosses the membrane as a helical span at residues 367-387 (IGLTSPLMLSGTLMLLTALLV). Over 388–396 (TAKVKMKKS) the chain is Cytoplasmic.

Belongs to the major facilitator superfamily. DHA1 family. NepI (TC 2.A.1.2.26) subfamily.

Its subcellular location is the cell inner membrane. It carries out the reaction inosine(in) + H(+)(out) = inosine(out) + H(+)(in). It catalyses the reaction guanosine(in) + H(+)(out) = guanosine(out) + H(+)(in). Its function is as follows. Involved in the efflux of purine ribonucleosides, such as inosine and guanosine. This chain is Purine ribonucleoside efflux pump NepI, found in Escherichia coli O157:H7.